The primary structure comprises 263 residues: Tryptophan synthase alpha chain (263 aa).

Active-site proton acceptor residues include E51 and D62.

Belongs to the TrpA family. As to quaternary structure, tetramer of two alpha and two beta chains.

It carries out the reaction (1S,2R)-1-C-(indol-3-yl)glycerol 3-phosphate + L-serine = D-glyceraldehyde 3-phosphate + L-tryptophan + H2O. It functions in the pathway amino-acid biosynthesis; L-tryptophan biosynthesis; L-tryptophan from chorismate: step 5/5. In terms of biological role, the alpha subunit is responsible for the aldol cleavage of indoleglycerol phosphate to indole and glyceraldehyde 3-phosphate. In Methanosarcina barkeri (strain Fusaro / DSM 804), this protein is Tryptophan synthase alpha chain.